Here is a 289-residue protein sequence, read N- to C-terminus: Esterase GA18864 (289 aa).

Over residues 1 to 19 the composition is skewed to low complexity; the sequence is MTNNDAAVEAPSSSRASSS. A disordered region spans residues 1 to 24; sequence MTNNDAAVEAPSSSRASSSKQQPK. Catalysis depends on charge relay system residues S133, D191, and H218. The interval 253-289 is disordered; the sequence is VSFIESGAEDNDDDGDANDAEVAAATAAAGSDLDDSD. Residues 259-271 show a composition bias toward acidic residues; that stretch reads GAEDNDDDGDAND. Low complexity predominate over residues 272-283; the sequence is AEVAAATAAAGS.

This sequence belongs to the LovG family.

The sequence is that of Esterase GA18864 from Drosophila pseudoobscura pseudoobscura (Fruit fly).